A 397-amino-acid chain; its full sequence is Subtilisin-like protease 12 (397 aa).

Residues 1–19 (MSIFKLMVIYFTLFWVVNA) form the signal peptide. A propeptide spanning residues 20–116 (AQLLDLDSHG…VEPNREMKAA (97 aa)) is cleaved from the precursor. The 81-residue stretch at 35–115 (YIVVMKNGVS…FVEPNREMKA (81 aa)) folds into the Inhibitor I9 domain. 3 N-linked (GlcNAc...) asparagine glycosylation sites follow: asparagine 123, asparagine 136, and asparagine 150. The region spanning 125–397 (TWGLARISHM…DKLLYNGSGA (273 aa)) is the Peptidase S8 domain. Catalysis depends on charge relay system residues aspartate 157 and histidine 188. N-linked (GlcNAc...) asparagine glycosylation is found at asparagine 249, asparagine 305, and asparagine 334. Serine 343 acts as the Charge relay system in catalysis. Asparagine 385 and asparagine 393 each carry an N-linked (GlcNAc...) asparagine glycan.

The protein belongs to the peptidase S8 family.

It is found in the secreted. In terms of biological role, secreted subtilisin-like serine protease with keratinolytic activity that contributes to pathogenicity. In Arthroderma gypseum (strain ATCC MYA-4604 / CBS 118893) (Microsporum gypseum), this protein is Subtilisin-like protease 12 (SUB12).